The following is a 388-amino-acid chain: Processive diacylglycerol beta-glucosyltransferase (388 aa).

Belongs to the glycosyltransferase 28 family. UgtP subfamily.

Its subcellular location is the cell membrane. The catalysed reaction is a 1,2-diacyl-3-O-(beta-D-glucopyranosyl)-sn-glycerol + UDP-alpha-D-glucose = a 1,2-diacyl-3-O-(beta-D-Glc-(1-&gt;6)-beta-D-Glc)-sn-glycerol + UDP + H(+). It catalyses the reaction a 1,2-diacyl-3-O-(beta-D-Glc-(1-&gt;6)-beta-D-Glc)-sn-glycerol + UDP-alpha-D-glucose = a 1,2-diacyl-3-O-(beta-D-Glc-(1-&gt;6)-beta-D-Glc-(1-&gt;6)-beta-D-Glc)-sn-glycerol + UDP + H(+). It carries out the reaction a 1,2-diacyl-sn-glycerol + UDP-alpha-D-glucose = a 1,2-diacyl-3-O-(beta-D-glucopyranosyl)-sn-glycerol + UDP + H(+). It functions in the pathway glycolipid metabolism; diglucosyl-diacylglycerol biosynthesis. Its function is as follows. Processive glucosyltransferase involved in the biosynthesis of both the bilayer- and non-bilayer-forming membrane glucolipids. Is able to successively transfer up to three glucosyl residues to diacylglycerol (DAG), thereby catalyzing the formation of beta-monoglucosyl-DAG (3-O-(beta-D-glucopyranosyl)-1,2-diacyl-sn-glycerol), beta-diglucosyl-DAG (3-O-(beta-D-glucopyranosyl-beta-(1-&gt;6)-D-glucopyranosyl)-1,2-diacyl-sn-glycerol) and beta-triglucosyl-DAG (3-O-(beta-D-glucopyranosyl-beta-(1-&gt;6)-D-glucopyranosyl-beta-(1-&gt;6)-D-glucopyranosyl)-1,2-diacyl-sn-glycerol). Beta-diglucosyl-DAG is the predominant glycolipid found in Bacillales and is also used as a membrane anchor for lipoteichoic acid (LTA). The sequence is that of Processive diacylglycerol beta-glucosyltransferase from Bacillus cereus (strain G9842).